Reading from the N-terminus, the 154-residue chain is Superoxide dismutase [Cu-Zn] (154 aa).

Residues H47, H49, and H64 each contribute to the Cu cation site. Residues C58 and C147 are joined by a disulfide bond. Residues H64, H72, H81, and D84 each coordinate Zn(2+). H121 contacts Cu cation. Positions 124-137 are enriched in basic and acidic residues; that stretch reads TDDLGKGENEESKK. A disordered region spans residues 124–144; that stretch reads TDDLGKGENEESKKTGNAGTR. R144 is a binding site for substrate.

It belongs to the Cu-Zn superoxide dismutase family. As to quaternary structure, homodimer. Cu cation is required as a cofactor. Zn(2+) serves as cofactor.

The protein localises to the cytoplasm. The catalysed reaction is 2 superoxide + 2 H(+) = H2O2 + O2. Destroys radicals which are normally produced within the cells and which are toxic to biological systems. The sequence is that of Superoxide dismutase [Cu-Zn] (sod1) from Botryotinia fuckeliana (Noble rot fungus).